The chain runs to 297 residues: N-acetylneuraminate lyase (297 aa).

Positions 47 and 48 each coordinate aceneuramate. Tyrosine 137 (proton donor) is an active-site residue. Lysine 165 serves as the catalytic Schiff-base intermediate with substrate. Aceneuramate-binding residues include threonine 167, glycine 189, aspartate 191, glutamate 192, and serine 208.

This sequence belongs to the DapA family. NanA subfamily. As to quaternary structure, homotetramer.

The protein resides in the cytoplasm. It catalyses the reaction aceneuramate = aldehydo-N-acetyl-D-mannosamine + pyruvate. The protein operates within amino-sugar metabolism; N-acetylneuraminate degradation; D-fructose 6-phosphate from N-acetylneuraminate: step 1/5. In terms of biological role, catalyzes the reversible aldol cleavage of N-acetylneuraminic acid (sialic acid; Neu5Ac) to form pyruvate and N-acetylmannosamine (ManNAc) via a Schiff base intermediate. This is N-acetylneuraminate lyase from Escherichia coli (strain SE11).